Consider the following 577-residue polypeptide: Arginine--tRNA ligase (577 aa).

Positions 122–132 (PNVAKEMHVGH) match the 'HIGH' region motif.

It belongs to the class-I aminoacyl-tRNA synthetase family. Monomer.

Its subcellular location is the cytoplasm. The enzyme catalyses tRNA(Arg) + L-arginine + ATP = L-arginyl-tRNA(Arg) + AMP + diphosphate. The chain is Arginine--tRNA ligase from Salmonella dublin (strain CT_02021853).